The chain runs to 227 residues: MPGCRISACGPGAQEGTAEQRSPPPPWDPMPSSQPPPPTPTLTPTPTPGQSPPLPDAAGASAGAAEDQELQRWRQGASGIAGLAGPGGGSGAAAGAGGRALELAEARRRLLEVEGRRRLVSELESRVLQLHRVFLAAELRLAHRAESLSRLSGGVAQAELYLAAHGSRLKKGPRRGRRGRPPALLASALGLGGCVPWGAGRLRRGHGPEPDSPFRRSPPRGPASPQR.

Disordered regions lie at residues 1–72 (MPGC…ELQR) and 200–227 (GRLR…SPQR). Over residues 22–55 (SPPPPWDPMPSSQPPPPTPTLTPTPTPGQSPPLP) the composition is skewed to pro residues.

In terms of assembly, interacts with TMF1; may regulate TRNP1 proteasomal degradation. Post-translationally, ubiquitinated, leading to its degradation by the proteasome.

Its subcellular location is the nucleus. Functionally, DNA-binding factor that regulates the expression of a subset of genes and plays a key role in tangential, radial, and lateral expansion of the brain neocortex. Regulates neural stem cells proliferation and the production of intermediate neural progenitors and basal radial glial cells affecting the process of cerebral cortex gyrification. May control the proliferation rate of cells by regulating their progression through key cell-cycle transition points. The sequence is that of TMF-regulated nuclear protein 1 (TRNP1) from Homo sapiens (Human).